The chain runs to 477 residues: Enolase 1, chloroplastic (477 aa).

A chloroplast-targeting transit peptide spans 1 to 41; sequence MALTTKPHHLQRSFLSPSRVSGERYLESAPSCLRFRRSGVQ. The substrate site is built by H203 and E212. The active-site Proton donor is the E255. 3 residues coordinate Mg(2+): D290, E340, and D365. E340 and D365 together coordinate substrate. Residue K390 is the Proton acceptor of the active site. Substrate is bound by residues 417–420 and K441; that span reads SHRS. S476 bears the Phosphoserine mark.

Belongs to the enolase family. Mg(2+) serves as cofactor. In terms of tissue distribution, highly expressed in young roots, young siliques, and shoot apex. Lowly expressed in young leaves, stems and cotyledons.

It localises to the plastid. Its subcellular location is the chloroplast. It catalyses the reaction (2R)-2-phosphoglycerate = phosphoenolpyruvate + H2O. The protein operates within carbohydrate degradation; glycolysis; pyruvate from D-glyceraldehyde 3-phosphate: step 4/5. In Arabidopsis thaliana (Mouse-ear cress), this protein is Enolase 1, chloroplastic (ENO1).